We begin with the raw amino-acid sequence, 763 residues long: Phosphoglycerol transferase I (763 aa).

Transmembrane regions (helical) follow at residues 4–19 (LLSV…IYAW), 26–48 (WWFA…LYAS), 76–98 (YILP…GWVL), and 110–132 (YSLL…RQIT).

It belongs to the OpgB family.

Its subcellular location is the cell inner membrane. It catalyses the reaction a phosphatidylglycerol + a membrane-derived-oligosaccharide D-glucose = a 1,2-diacyl-sn-glycerol + a membrane-derived-oligosaccharide 6-(glycerophospho)-D-glucose.. Its pathway is glycan metabolism; osmoregulated periplasmic glucan (OPG) biosynthesis. In terms of biological role, transfers a phosphoglycerol residue from phosphatidylglycerol to the membrane-bound nascent glucan backbones. The chain is Phosphoglycerol transferase I from Salmonella typhi.